The chain runs to 1378 residues: Cell surface hyaluronidase (1378 aa).

The disordered stretch occupies residues 1-77; sequence MQVNDGPSSH…GNRREQAQNQ (77 aa). Over 1–82 the chain is Cytoplasmic; that stretch reads MQVNDGPSSH…QAQNQQRKNT (82 aa). The span at 36 to 58 shows a compositional bias: pro residues; sequence RSPPPAKAPPPPPLKPPVPPPAR. A helical; Signal-anchor for type II membrane protein membrane pass occupies residues 83–103; the sequence is YICVGIFFGIFLLILILVLSL. The Extracellular portion of the chain corresponds to 104–1378; the sequence is TSKDVLDENC…MDLELLKKIS (1275 aa). Residues 121 to 247 form the G8 domain; the sequence is RSWKPGHDLK…ERMSWTFLTR (127 aa). N-linked (GlcNAc...) asparagine glycosylation is found at Asn-171, Asn-264, Asn-360, Asn-527, and Asn-639. Residues 257 to 414 enclose the GG-type lectin 1 domain; the sequence is GDHAFQKNFS…YPTTGFQVDA (158 aa). One copy of the PbH1 1 repeat lies at 672 to 694; sequence HPNNHLISNSAAGSQDAGIWYVF. Residue Asn-696 is glycosylated (N-linked (GlcNAc...) asparagine). One copy of the PbH1 2 repeat lies at 714-736; that stretch reads TPLGTFFNNRVHSNFKAGLFIDR. N-linked (GlcNAc...) asparagine glycans are attached at residues Asn-742, Asn-854, Asn-905, Asn-996, Asn-1069, Asn-1160, and Asn-1221. Positions 1203–1363 constitute a GG-type lectin 2 domain; that stretch reads NSYLQTQIKS…LEEYSCPPKK (161 aa).

It belongs to the CEMIP family. Ca(2+) is required as a cofactor.

The protein localises to the cell membrane. The catalysed reaction is Random hydrolysis of (1-&gt;4)-linkages between N-acetyl-beta-D-glucosamine and D-glucuronate residues in hyaluronate.. In terms of biological role, cell surface hyaluronidase that mediates the initial cleavage of extracellular high-molecular-weight hyaluronan into intermediate-size hyaluronan. Acts as a regulator of angiogenesis in embryos by mediating degradation of extracellular hyaluronan, thereby promoting VEGF signaling. Acts as a regulator of heart development during myocardial and endocardial morphogenesis: involved in the looping stage of heart morphogenesis. Stimulates migration of endocardial cells and increases both myocardial and endocardial fusion. Involved in the restriction of endocardial cushions (ECs) formation to the atrioventricular canal (AVC). Also required for muscle fiber attachment. Is very specific to hyaluronan; not able to cleave chondroitin sulfate or dermatan sulfate. The polypeptide is Cell surface hyaluronidase (cemip2) (Danio rerio (Zebrafish)).